The primary structure comprises 349 residues: UDP-N-acetylenolpyruvoylglucosamine reductase (349 aa).

The FAD-binding PCMH-type domain maps to 25-197 (GIAARARFAA…VAVTFRLPKQ (173 aa)). Residue arginine 173 is part of the active site. The active-site Proton donor is the serine 249. Residue glutamate 345 is part of the active site.

It belongs to the MurB family. FAD serves as cofactor.

The protein resides in the cytoplasm. It carries out the reaction UDP-N-acetyl-alpha-D-muramate + NADP(+) = UDP-N-acetyl-3-O-(1-carboxyvinyl)-alpha-D-glucosamine + NADPH + H(+). Its pathway is cell wall biogenesis; peptidoglycan biosynthesis. Its function is as follows. Cell wall formation. This Burkholderia cenocepacia (strain HI2424) protein is UDP-N-acetylenolpyruvoylglucosamine reductase.